Reading from the N-terminus, the 320-residue chain is MHTKNLFYSRTQQITQYLSALLMMVILTRTSISSAYPLFAQQGYENPREATGRIVCANCHLANKPVNIEVPQAILPDTVFEAVVQIPYDLQLKQVLSNGKKGGLNVGAVLILPEGFELAPPDRISPELKEKIGNLYFQSYRPNIKNIFVVGPVPGQKYTKITFPILSPNPANNRRAHFLKYPIYVGGNRGRGQIYPDGSKSNNTVFNATASGRVKKIIRNQKGGYEIIINDGSDSNEVVNLLPPGLEPLVSEGESIKLDQPLTSNPNVGGFGQDVAEVVLQDPSRVQVLLFFFASIILAQIFLVLKKKQFEKVQLTKINL.

A signal peptide spans 1-35 (MHTKNLFYSRTQQITQYLSALLMMVILTRTSISSA). Positions 36, 56, 59, and 60 each coordinate heme. The chain crosses the membrane as a helical span at residues 286-306 (VQVLLFFFASIILAQIFLVLK).

This sequence belongs to the cytochrome f family. As to quaternary structure, the 4 large subunits of the cytochrome b6-f complex are cytochrome b6, subunit IV (17 kDa polypeptide, petD), cytochrome f and the Rieske protein, while the 4 small subunits are PetG, PetL, PetM and PetN. The complex functions as a dimer. Requires heme as cofactor.

It localises to the plastid thylakoid membrane. Functionally, component of the cytochrome b6-f complex, which mediates electron transfer between photosystem II (PSII) and photosystem I (PSI), cyclic electron flow around PSI, and state transitions. In Cuscuta gronovii (Common dodder), this protein is Cytochrome f.